The primary structure comprises 818 residues: MLKLKFRWNKPDDGPRVKRQKSQQLTLDSPEGSETSSRPGGGYDNDRDVNGTFKRPWDITKIPGYNQTYVNEASLDKFAAYLKEEEVPVESSTPVSSEEMLPLEPVQKEYITSKHDWTPVFSVLKNNNSVNKRKMSHTALKSDFKHYLDMYDKEEKRRRGKSKKDKEGSEGDKTKTKEPKELVRKSVFSSILGVFSIFSKTKDGRKLKRDEIGEGIGFWLMRWPALFFIGMWLLFLTTIYASVRVLVAGYENILTWRGKRAKLRKVLRGARTYEQWVQAAQDLDVELGNAEWRENPKFGYYDHVTISKLTKMVRKLRLQDQAEDLSNILQGCIKNNFAGTESSTLYSQTYYGTKKVVEQWNEELGKAVTYVLESPKIDDEEKRDLFRLYSKNFGKSALCLSGGGCFAYLHFGIVKAMLDQDLLPQIISGTSGGALIAALACTRTDEELRQILVPELAYKITACWEPFPKWVFRWWRTGARFDSVDWARRSCWFTLGDMTFKEAYQRTGRILNVSTVPADPHSPVILCNYITSPDCLIWSALLASAAVPGILNPVMLMNKTKSGDIVPFSFGSKWKDGSLRTDIPVDALNTYFNVNCSIVSQVNPHIALFFYAPRGTVGRPVSHRKGKGWRGGFLGAALESMIKLEIRKWLKFIKAVELLPRFVDQDWTNVWLQRFSGSVTLWPKIHLADFWHILGDPWPEKMEDLLYRGQQCAFPKLLFLKHRMNIEKRIRNGRQATRHRKRKLEETDVCDLVRKTFSESDPDSDVKHSFVFPALMAPRSAGTDISSSNSDYDHEPQWEMDEGDSFLTADEEYPTTIL.

Disordered regions lie at residues Met1–Asn50 and Glu154–Glu178. Residues Ser22 to Arg38 are compositionally biased toward polar residues. Positions Lys164–Glu178 are enriched in basic and acidic residues. The helical transmembrane segment at Trp223–Val243 threads the bilayer. A PNPLA domain is found at Leu398 to Asn589. The GXSXG signature appears at Gly429–Gly433. Ser431 serves as the catalytic Nucleophile. Asp576 serves as the catalytic Proton acceptor. A disordered region spans residues Ala781–Ser805.

This sequence belongs to the PLPL family.

Its subcellular location is the membrane. Functionally, probable lipid hydrolase. The polypeptide is Patatin-like phospholipase domain-containing protein YALI0D16379g (Yarrowia lipolytica (strain CLIB 122 / E 150) (Yeast)).